A 275-amino-acid polypeptide reads, in one-letter code: Small ribosomal subunit protein uS2 (275 aa).

The disordered stretch occupies residues 226–275 (AAAPNSASVREEEFSAEAGDEGKGRRAPAKKATEKKADAPAAAPEAPAAE). Over residues 264 to 275 (APAAAPEAPAAE) the composition is skewed to low complexity.

This sequence belongs to the universal ribosomal protein uS2 family.

In Xanthomonas campestris pv. campestris (strain ATCC 33913 / DSM 3586 / NCPPB 528 / LMG 568 / P 25), this protein is Small ribosomal subunit protein uS2.